Here is a 382-residue protein sequence, read N- to C-terminus: Chaperone protein DnaJ (382 aa).

In terms of domain architecture, J spans 5–70; the sequence is DYYELLGVQK…EKRAAYDRYG (66 aa). A CR-type zinc finger spans residues 146-224; sequence GAEKEISFRK…CHGEGRVRRT (79 aa). Residues cysteine 159, cysteine 162, cysteine 176, cysteine 179, cysteine 198, cysteine 201, cysteine 212, and cysteine 215 each contribute to the Zn(2+) site. CXXCXGXG motif repeat units follow at residues 159–166, 176–183, 198–205, and 212–219; these read CERCDGSG, CPTCRGAG, CPTCGGMG, and CTVCHGEG. The interval 230–250 is disordered; that stretch reads RIPPGVDNGSRLRSSGNGEAG.

This sequence belongs to the DnaJ family. Homodimer. It depends on Zn(2+) as a cofactor.

It localises to the cytoplasm. In terms of biological role, participates actively in the response to hyperosmotic and heat shock by preventing the aggregation of stress-denatured proteins and by disaggregating proteins, also in an autonomous, DnaK-independent fashion. Unfolded proteins bind initially to DnaJ; upon interaction with the DnaJ-bound protein, DnaK hydrolyzes its bound ATP, resulting in the formation of a stable complex. GrpE releases ADP from DnaK; ATP binding to DnaK triggers the release of the substrate protein, thus completing the reaction cycle. Several rounds of ATP-dependent interactions between DnaJ, DnaK and GrpE are required for fully efficient folding. Also involved, together with DnaK and GrpE, in the DNA replication of plasmids through activation of initiation proteins. The protein is Chaperone protein DnaJ of Opitutus terrae (strain DSM 11246 / JCM 15787 / PB90-1).